The following is a 96-amino-acid chain: MSAVVQQQGDLLLNVYIQPKASRDQIVGLHGDELKVAITAPPIDGKANAHLSKYLAKAFKVPKSDVYIIKGELGRHKQIRIVTPKLIPPEVSELLE.

Belongs to the UPF0235 family.

The chain is UPF0235 protein Sputcn32_2690 from Shewanella putrefaciens (strain CN-32 / ATCC BAA-453).